The following is a 249-amino-acid chain: Aquaporin TIP2-1 (249 aa).

2 consecutive transmembrane segments (helical) span residues 20 to 40 (AYVAEFIATLLFVFAGVGSAI) and 54 to 74 (AGLVAIAIAHALALFVGVSVA). Positions 83–85 (NPA) match the NPA 1 motif. A run of 3 helical transmembrane segments spans residues 102-122 (VFYWVAQLLGATVACLLLGFV), 141-161 (GVVFEVVITFALVYTVYATAA), and 168-188 (LGTIAPIAIGFIVGANILAAG). Residues 196–198 (NPA) carry the NPA 2 motif. Residues 217-237 (WVGPLVGGGLAGLVYGDVFIG) form a helical membrane-spanning segment.

It belongs to the MIP/aquaporin (TC 1.A.8) family. TIP (TC 1.A.8.10) subfamily.

The protein resides in the vacuole membrane. Its function is as follows. Aquaporins facilitate the transport of water and small neutral solutes across cell membranes. The polypeptide is Aquaporin TIP2-1 (TIP2-1) (Zea mays (Maize)).